A 231-amino-acid polypeptide reads, in one-letter code: Endonuclease NucS (231 aa).

Belongs to the NucS endonuclease family.

The protein localises to the cytoplasm. Cleaves both 3' and 5' ssDNA extremities of branched DNA structures. In Beutenbergia cavernae (strain ATCC BAA-8 / DSM 12333 / CCUG 43141 / JCM 11478 / NBRC 16432 / NCIMB 13614 / HKI 0122), this protein is Endonuclease NucS.